Here is a 496-residue protein sequence, read N- to C-terminus: Probable cytosol aminopeptidase (496 aa).

Residues Lys251 and Asp256 each contribute to the Mn(2+) site. The active site involves Lys263. The Mn(2+) site is built by Asp274, Asp333, and Glu335. The active site involves Arg337.

This sequence belongs to the peptidase M17 family. It depends on Mn(2+) as a cofactor.

It localises to the cytoplasm. It catalyses the reaction Release of an N-terminal amino acid, Xaa-|-Yaa-, in which Xaa is preferably Leu, but may be other amino acids including Pro although not Arg or Lys, and Yaa may be Pro. Amino acid amides and methyl esters are also readily hydrolyzed, but rates on arylamides are exceedingly low.. The enzyme catalyses Release of an N-terminal amino acid, preferentially leucine, but not glutamic or aspartic acids.. Presumably involved in the processing and regular turnover of intracellular proteins. Catalyzes the removal of unsubstituted N-terminal amino acids from various peptides. This is Probable cytosol aminopeptidase from Acidovorax ebreus (strain TPSY) (Diaphorobacter sp. (strain TPSY)).